The primary structure comprises 345 residues: Opioid-binding protein/cell adhesion molecule (345 aa).

Residues 1-27 (MGVCGSLFQPWKCLVVVSLRLLFLVPT) form the signal peptide. Ig-like C2-type domains are found at residues 39–126 (PKAM…PKTS), 136–219 (PQIM…VKIT), and 223–310 (PPYI…ASIT). N-linked (GlcNAc...) asparagine glycans are attached at residues Asn-44, Asn-70, and Asn-140. Residues Cys-57 and Cys-115 are joined by a disulfide bond. Cystine bridges form between Cys-157-Cys-202 and Cys-244-Cys-296. Asn-285, Asn-293, and Asn-306 each carry an N-linked (GlcNAc...) asparagine glycan. Asn-322 is lipidated: GPI-anchor amidated asparagine. A propeptide spans 323–345 (SASRALACLWLSGTLFAHFFIKF) (removed in mature form).

This sequence belongs to the immunoglobulin superfamily. IgLON family.

The protein localises to the cell membrane. Binds opioids in the presence of acidic lipids; probably involved in cell contact. The sequence is that of Opioid-binding protein/cell adhesion molecule (OPCML) from Bos taurus (Bovine).